Here is a 298-residue protein sequence, read N- to C-terminus: Cation-efflux pump FieF (298 aa).

A helical transmembrane segment spans residues 24-44 (LLIKIFAWWYTGSVSILAALV). Asp45 and Asp49 together coordinate Zn(2+). 2 helical membrane-spanning segments follow: residues 80–100 (SLAA…LTSI) and 112–132 (PGVG…LVTF). The Zn(2+) site is built by His151 and Asp155. Transmembrane regions (helical) follow at residues 154-174 (SDVM…YGWH) and 176-196 (ADAL…LRMG).

Belongs to the cation diffusion facilitator (CDF) transporter (TC 2.A.4) family. FieF subfamily. Homodimer.

It is found in the cell inner membrane. It carries out the reaction Zn(2+)(in) + H(+)(out) = Zn(2+)(out) + H(+)(in). It catalyses the reaction Cd(2+)(in) + H(+)(out) = Cd(2+)(out) + H(+)(in). The enzyme catalyses Fe(2+)(in) + H(+)(out) = Fe(2+)(out) + H(+)(in). In terms of biological role, divalent metal cation transporter which exports Zn(2+), Cd(2+) and possibly Fe(2+). May be involved in zinc and iron detoxification by efflux. In Salmonella typhi, this protein is Cation-efflux pump FieF.